We begin with the raw amino-acid sequence, 441 residues long: Histidinol dehydrogenase (441 aa).

Tyr-136, Gln-197, and Asn-220 together coordinate NAD(+). The substrate site is built by Ser-243, Gln-265, and His-268. 2 residues coordinate Zn(2+): Gln-265 and His-268. Residues Glu-333 and His-334 each act as proton acceptor in the active site. Residues His-334, Asp-367, Glu-421, and His-426 each coordinate substrate. Asp-367 contacts Zn(2+). His-426 serves as a coordination point for Zn(2+).

This sequence belongs to the histidinol dehydrogenase family. Zn(2+) serves as cofactor.

It catalyses the reaction L-histidinol + 2 NAD(+) + H2O = L-histidine + 2 NADH + 3 H(+). The protein operates within amino-acid biosynthesis; L-histidine biosynthesis; L-histidine from 5-phospho-alpha-D-ribose 1-diphosphate: step 9/9. Functionally, catalyzes the sequential NAD-dependent oxidations of L-histidinol to L-histidinaldehyde and then to L-histidine. In Pseudomonas fluorescens (strain Pf0-1), this protein is Histidinol dehydrogenase.